The following is a 1462-amino-acid chain: Serine/threonine-protein kinase HSL1 (1462 aa).

Disordered stretches follow at residues 1–26 (MSTVVNRRSSHQFDSPSNHLDHSSSM) and 41–69 (RLSQISTNTNNSNKKRKTQNKIGPWKLGR). In terms of domain architecture, Protein kinase spans 65–330 (WKLGRTLGRG…IDAILTHPLL (266 aa)). ATP is bound by residues 71-79 (LGRGSTGRV) and lysine 94. The Proton acceptor role is filled by aspartate 201. Disordered stretches follow at residues 412–450 (SNSFNSSNDVDSARSLPRSTSYVKTTVTDHATGEKHTTV), 471–540 (SAKG…TSVN), 598–637 (ENSKPVSKTPVSQLPPPPPPPIETPTSRTNSVKRGKTWSL), 992–1031 (EDEEFEDEKPFISVPSSEDDEGNTHKNKRGGLRDSGNYDF), 1095–1230 (KETL…QQTK), and 1269–1321 (NRAA…LQKE). 2 stretches are compositionally biased toward polar residues: residues 428–440 (PRSTSYVKTTVTD) and 471–487 (SAKGNVLSNITNRPNTP). Residues 510–526 (ASRSRNASSRSLKSNSS) are compositionally biased toward low complexity. Polar residues predominate over residues 527–540 (TGRNGNNASVTSVN). Pro residues predominate over residues 610–620 (QLPPPPPPPIE). Residues 636–715 (SLARRERELA…KLQKHQSAHD (80 aa)) adopt a coiled-coil conformation. Over residues 1095 to 1130 (KETLLKNHSSDEATIEVKEDNNEHDFNDKIKQHYDD) the composition is skewed to basic and acidic residues. Over residues 1131 to 1153 (NGDSEEDDEDEDEEEEDDDDDDD) the composition is skewed to acidic residues. Composition is skewed to polar residues over residues 1165 to 1176 (HNYSLAEITSES), 1197 to 1218 (STGIFSTTQFPRSPYVVNNNGD), and 1292 to 1302 (NISQPLSSPTK).

The protein belongs to the protein kinase superfamily. CAMK Ser/Thr protein kinase family. NIM1 subfamily. Phosphorylated throughout the cell cycle, except for the G1 phase.

Its subcellular location is the bud neck. The catalysed reaction is L-seryl-[protein] + ATP = O-phospho-L-seryl-[protein] + ADP + H(+). It carries out the reaction L-threonyl-[protein] + ATP = O-phospho-L-threonyl-[protein] + ADP + H(+). Protein kinase involved in determination of morphology during the cell cycle of both yeast-form and hyphal cells via regulation of SWE1 and CDC28. Regulates pseudohypha formation, but is not required for septin ring organization or septum formation. Plays an essential role in virulence in a mouse model. The sequence is that of Serine/threonine-protein kinase HSL1 (HSL1) from Candida albicans (strain SC5314 / ATCC MYA-2876) (Yeast).